The chain runs to 560 residues: Vesicular glutamate transporter 1 (560 aa).

The Cytoplasmic portion of the chain corresponds to 1–63 (MEFRQEEFRK…CTCFGLPRRY (63 aa)). Residues 64–84 (IIAIMSGLGFCISFGIRCNLG) form a helical membrane-spanning segment. Topologically, residues 85–116 (VAIVSMVNNSTTHRGGHVVMQKAQFNWDPETV) are extracellular. The chain crosses the membrane as a helical span at residues 117–137 (GLIHGSFFWGYIVTQIPGGFI). Topologically, residues 138-140 (CQK) are cytoplasmic. A helical transmembrane segment spans residues 141-161 (FAANRVFGFAIVATSTLNMLI). Topologically, residues 162-169 (PSAARVHY) are extracellular. Residues 170–190 (GCVIFVRILQGLVEGVTYPAC) traverse the membrane as a helical segment. Over 191 to 208 (HGIWSKWAPPLERSRLAT) the chain is Cytoplasmic. Residues 209–229 (TAFCGSYAGAVVAMPLAGVLV) form a helical membrane-spanning segment. At 230–236 (QYSGWSS) the chain is on the extracellular side. A helical transmembrane segment spans residues 237-257 (VFYVYGSFGIFWYLFWLLVSY). The Cytoplasmic portion of the chain corresponds to 258 to 302 (ESPALHPSISEEERKYIEDAIGESAKLMNPVTKFNTPWRRFFTSM). Residues 303–323 (PVYAIIVANFCRSWTFYLLLI) form a helical membrane-spanning segment. The Extracellular portion of the chain corresponds to 324-341 (SQPAYFEEVFGFEISKVG). A helical transmembrane segment spans residues 342–362 (LVSALPHLVMTIIVPIGGQIA). Topologically, residues 363–378 (DFLRSRRIMSTTNVRK) are cytoplasmic. Residues 379-399 (LMNCGGFGMEATLLLVVGYSH) form a helical membrane-spanning segment. Residues 400-401 (SK) lie on the Extracellular side of the membrane. A helical membrane pass occupies residues 402-422 (GVAISFLVLAVGFSGFAISGF). Over 423-435 (NVNHLDIAPRYAS) the chain is Cytoplasmic. The helical transmembrane segment at 436-456 (ILMGISNGVGTLSGMVCPIIV) threads the bilayer. Topologically, residues 457 to 469 (GAMTKHKTREEWQ) are extracellular. A helical transmembrane segment spans residues 470–490 (YVFLIASLVHYGGVIFYGVFA). The Cytoplasmic segment spans residues 491–560 (SGEKQPWAEP…PRPPPPVRDY (70 aa)). Residues 497–560 (WAEPEEMSEE…PRPPPPVRDY (64 aa)) form a disordered region. At S504 the chain carries Phosphoserine. The segment covering 520–529 (DESEMEDEAE) has biased composition (acidic residues). Pro residues-rich tracts occupy residues 531–540 (PGAPPAPPPS) and 550–560 (PPRPPPPVRDY).

It belongs to the major facilitator superfamily. Sodium/anion cotransporter family. VGLUT subfamily. As to quaternary structure, interacts with SHANK3.

It is found in the cytoplasmic vesicle. The protein localises to the secretory vesicle. The protein resides in the synaptic vesicle membrane. Its subcellular location is the cell membrane. It localises to the synapse. It is found in the synaptosome. The catalysed reaction is L-glutamate(out) = L-glutamate(in). It catalyses the reaction chloride(in) = chloride(out). It carries out the reaction 3 Na(+)(out) + phosphate(out) = 3 Na(+)(in) + phosphate(in). The enzyme catalyses phosphate(in) = phosphate(out). The catalysed reaction is K(+)(in) + H(+)(out) = K(+)(out) + H(+)(in). Its activity is regulated as follows. Chloride channel activity is allosterically activated by lumenal H(+) and Cl(-) leading to synaptic vesicles acidification. The L-glutamate transport activity is allosterically activated by lumenal H(+) and Cl(-). The allosteric activation by H(+) efficiently prevents non-vesicular efflux across the plasma membrane, thereby restricting L-glutamate transport activity to acidic membranes such as synaptic vesicles. Functionally, multifunctional transporter that transports L-glutamate as well as multiple ions such as chloride, proton, potassium, sodium and phosphate. At the synaptic vesicle membrane, mainly functions as an uniporter which transports preferentially L-glutamate but also phosphate from the cytoplasm into synaptic vesicles at presynaptic nerve terminals of excitatory neural cells. The L-glutamate or phosphate uniporter activity is electrogenic and is driven by the proton electrochemical gradient, mainly by the electrical gradient established by the vacuolar H(+)-ATPase across the synaptic vesicle membrane. In addition, functions as a chloride channel that allows a chloride permeation through the synaptic vesicle membrane that affects the proton electrochemical gradient and promotes synaptic vesicles acidification. Moreover, may function as a K(+)/H(+) antiport allowing to maintain the electrical gradient and to decrease chemical gradient and therefore sustain vesicular glutamate uptake. The vesicular K(+)/H(+) antiport activity is electroneutral. At the plasma membrane, following exocytosis, functions as a symporter of Na(+) and phosphate from the extracellular space to the cytoplasm allowing synaptic phosphate homeostasis regulation. The symporter activity is driven by an inside negative membrane potential and is electrogenic. Is necessary for synaptic signaling of visual-evoked responses from photoreceptors. The chain is Vesicular glutamate transporter 1 from Bos taurus (Bovine).